The sequence spans 309 residues: Homoserine O-acetyltransferase (309 aa).

Catalysis depends on Cys-142, which acts as the Acyl-thioester intermediate. Residues Lys-163 and Ser-192 each contribute to the substrate site. Catalysis depends on His-235, which acts as the Proton acceptor. Residue Glu-237 is part of the active site. Residue Arg-249 participates in substrate binding.

This sequence belongs to the MetA family.

Its subcellular location is the cytoplasm. The catalysed reaction is L-homoserine + acetyl-CoA = O-acetyl-L-homoserine + CoA. Its pathway is amino-acid biosynthesis; L-methionine biosynthesis via de novo pathway; O-acetyl-L-homoserine from L-homoserine: step 1/1. In terms of biological role, transfers an acetyl group from acetyl-CoA to L-homoserine, forming acetyl-L-homoserine. In Petrotoga mobilis (strain DSM 10674 / SJ95), this protein is Homoserine O-acetyltransferase.